A 465-amino-acid polypeptide reads, in one-letter code: Pancreatic triacylglycerol lipase (465 aa).

Residues 1–16 form the signal peptide; it reads MLLVWSLALLLGAVAG. Cystine bridges form between cysteine 20–cysteine 26 and cysteine 107–cysteine 118. Catalysis depends on serine 169, which acts as the Nucleophile. Catalysis depends on aspartate 193, which acts as the Charge relay system. Glutamate 204, arginine 207, aspartate 209, and aspartate 212 together coordinate Ca(2+). The cysteines at positions 254 and 278 are disulfide-linked. Histidine 280 functions as the Charge relay system in the catalytic mechanism. 3 cysteine pairs are disulfide-bonded: cysteine 302–cysteine 313, cysteine 316–cysteine 321, and cysteine 449–cysteine 465. In terms of domain architecture, PLAT spans 355-465; that stretch reads WRYKVSVTLS…EDVLLTLNAC (111 aa).

Belongs to the AB hydrolase superfamily. Lipase family. Forms a 1:1 stoichiometric complex with (pro)colipase/CLPS. As to expression, expressed in many tissues with highest expression in liver. During hibernation there is a significant increases in expression in heart, white adipose tissue (WAT), and testis; but not in pancreas.

It localises to the secreted. The catalysed reaction is a triacylglycerol + H2O = a diacylglycerol + a fatty acid + H(+). The enzyme catalyses 1,2,3-tributanoylglycerol + H2O = dibutanoylglycerol + butanoate + H(+). It catalyses the reaction 1,2,3-tri-(9Z-octadecenoyl)-glycerol + H2O = di-(9Z)-octadecenoylglycerol + (9Z)-octadecenoate + H(+). It carries out the reaction all-trans-retinyl hexadecanoate + H2O = all-trans-retinol + hexadecanoate + H(+). The catalysed reaction is 1,2-di-(9Z-octadecenoyl)-glycerol + H2O = (9Z-octadecenoyl)-glycerol + (9Z)-octadecenoate + H(+). Inhibited by bile salts, is reactivated by (pro)colipase/CLPS. Its function is as follows. Plays an important role in fat metabolism. It preferentially splits the esters of long-chain fatty acids at positions 1 and 3, producing mainly 2-monoacylglycerol and free fatty acids, and shows considerably higher activity against insoluble emulsified substrates than against soluble ones. Plays a role in hibernation as a key enzyme that shows high activity at low temperatures. When expressed in the hibernating heart it liberates fatty acids from triglycerides at temperatures as low as 0 degrees Celsius. The protein is Pancreatic triacylglycerol lipase (PNLIP) of Ictidomys tridecemlineatus (Thirteen-lined ground squirrel).